Consider the following 194-residue polypeptide: Recombination protein RecR (194 aa).

Residues 55–70 form a C4-type zinc finger; the sequence is CRECGNLAEGELCPIC. In terms of domain architecture, Toprim spans 78 to 171; it reads SLLAVVESVA…RVTRPAYGLP (94 aa).

This sequence belongs to the RecR family.

Its function is as follows. May play a role in DNA repair. It seems to be involved in an RecBC-independent recombinational process of DNA repair. It may act with RecF and RecO. The protein is Recombination protein RecR of Thermus thermophilus (strain ATCC BAA-163 / DSM 7039 / HB27).